We begin with the raw amino-acid sequence, 1279 residues long: Photoreceptor cilium actin regulator (1279 aa).

G2 carries the N-myristoyl glycine lipid modification. Residue C3 is the site of S-palmitoyl cysteine attachment. 5 disordered regions span residues 101–168 (NKPQ…KGRV), 380–598 (AAQV…SHVE), 802–821 (EVSE…ENLP), 860–1107 (ASHP…TTAK), and 1127–1279 (KSSS…KEIS). Over residues 126–168 (FSGKESKENTPQETSKGNRESVCHQPDSQDHCRQSATESKGRV) the composition is skewed to basic and acidic residues. A compositionally biased stretch (acidic residues) spans 477-491 (SEEEDCSPEEEDELS). Basic and acidic residues-rich tracts occupy residues 535–547 (LKMK…RIKF) and 580–598 (GPER…SHVE). Acidic residues predominate over residues 804–818 (SESEDISGDVEEDLE). Composition is skewed to polar residues over residues 886-901 (GSGS…SGST), 913-925 (DLNS…PSSE), and 955-965 (TNPTPGQSRTL). Residues 972-990 (FSRDPHSSEASRKGPERSL) show a composition bias toward basic and acidic residues. Over residues 1047–1062 (RKTTSPPCQHPQSNPA) the composition is skewed to polar residues. A compositionally biased stretch (low complexity) spans 1076 to 1090 (PSSASCSSPSVSPSR). Basic and acidic residues predominate over residues 1091-1100 (GSKDSIHSED). Polar residues predominate over residues 1226 to 1241 (WNNSRVPELQGSSTKR). Residues 1259-1279 (RMNRGQDRPQPESQPQHKEIS) are compositionally biased toward basic and acidic residues.

As to expression, specifically expressed in retina.

It is found in the cell projection. It localises to the cilium. Its subcellular location is the photoreceptor outer segment. The protein localises to the photoreceptor inner segment. Functionally, plays an essential role for normal photoreceptor cell maintenance and vision. This is Photoreceptor cilium actin regulator from Mus musculus (Mouse).